Here is a 428-residue protein sequence, read N- to C-terminus: C4-dicarboxylate transport protein 1 (428 aa).

8 helical membrane-spanning segments follow: residues 5 to 27 (FYKILYVQVLAAIVIGVLLGHFE), 42 to 64 (IQLIKMVIGPIIFCTVVSGIAGM), 77 to 99 (ALLYFEVVSTFALVIGLVAGHIF), 150 to 167 (ILQILLIALLFGGALSAM), 188 to 210 (IVHVITRVAPIGAFGAMAFTIGK), 225 to 247 (TFYLTAIIFVVVVLGIIARLTGF), 314 to 336 (IFISQALNIELTLTQQLTILAVA), and 351 to 373 (FITLAATLAVVPTIPVAGMVLIL).

This sequence belongs to the dicarboxylate/amino acid:cation symporter (DAACS) (TC 2.A.23) family.

The protein localises to the cell inner membrane. In terms of biological role, responsible for the transport of dicarboxylates such as succinate, fumarate, and malate from the periplasm across the membrane. The chain is C4-dicarboxylate transport protein 1 (dctA1) from Ralstonia nicotianae (strain ATCC BAA-1114 / GMI1000) (Ralstonia solanacearum).